The primary structure comprises 214 residues: Vascular endothelial growth factor A (214 aa).

The signal sequence occupies residues 1–26 (MNFLLSWVHWSLALLLYLHHAKWSQA). Intrachain disulfides connect cysteine 51/cysteine 93, cysteine 82/cysteine 127, and cysteine 86/cysteine 129. Asparagine 100 carries N-linked (GlcNAc...) asparagine glycosylation. The segment covering 131–142 (PKKDRARQEKKS) has biased composition (basic and acidic residues). The segment at 131–162 (PKKDRARQEKKSIRGKGKGQKRKRKKSRYKPW) is disordered. Basic residues predominate over residues 143-159 (IRGKGKGQKRKRKKSRY).

Belongs to the PDGF/VEGF growth factor family. As to quaternary structure, homodimer; disulfide-linked. Also found as heterodimer with PGF. Interacts with NRP1. Interacts with BSG. Interacts with CD82; this interaction inhibits VEGFA-mediated signaling pathway.

The protein resides in the secreted. In terms of biological role, growth factor active in angiogenesis, vasculogenesis and endothelial cell growth. Induces endothelial cell proliferation, promotes cell migration, inhibits apoptosis and induces permeabilization of blood vessels. Binds to the FLT1/VEGFR1 and KDR/VEGFR2 receptors, heparan sulfate and heparin. Binding to NRP1 receptor initiates a signaling pathway needed for motor neuron axon guidance and cell body migration, including for the caudal migration of facial motor neurons from rhombomere 4 to rhombomere 6 during embryonic development. Also binds the DEAR/FBXW7-AS1 receptor. This is Vascular endothelial growth factor A (VEGFA) from Canis lupus familiaris (Dog).